The sequence spans 196 residues: Large ribosomal subunit protein uL18 (196 aa).

This sequence belongs to the universal ribosomal protein uL18 family. Part of the 50S ribosomal subunit. Contacts the 5S and 23S rRNAs.

Functionally, this is one of the proteins that bind and probably mediate the attachment of the 5S RNA into the large ribosomal subunit, where it forms part of the central protuberance. The protein is Large ribosomal subunit protein uL18 of Sulfurisphaera tokodaii (strain DSM 16993 / JCM 10545 / NBRC 100140 / 7) (Sulfolobus tokodaii).